The chain runs to 277 residues: MQIDIQSRDVFYVSDGTAITCETLGHVVLGQFPFEANEKTFPFVESEDKLSDLLKEIEISYRATGHEPLVFFSIVIPEIKLKLLDAPAHCYDVLESIVQKVQDDTKMAPKPKLQRSRSVNKDSDKYFDRIAAIEYTLAHDDGITLKGLEEADIILLGVSRSGKTPTSLYMAMQFGLRVANYPFIHDDIARLRLLPEFEIYRHKLFGLTIDAERLTEIRENRLAGSEYASDSQCLYELQTVEGLFRREAIPYINTSSLSVEEISTRILERTGLRRRLL.

Position 157 to 164 (157 to 164 (GVSRSGKT)) interacts with ADP.

Belongs to the pyruvate, phosphate/water dikinase regulatory protein family. PSRP subfamily.

The catalysed reaction is [pyruvate, water dikinase] + ADP = [pyruvate, water dikinase]-phosphate + AMP + H(+). It carries out the reaction [pyruvate, water dikinase]-phosphate + phosphate + H(+) = [pyruvate, water dikinase] + diphosphate. In terms of biological role, bifunctional serine/threonine kinase and phosphorylase involved in the regulation of the phosphoenolpyruvate synthase (PEPS) by catalyzing its phosphorylation/dephosphorylation. The protein is Putative phosphoenolpyruvate synthase regulatory protein of Vibrio atlanticus (strain LGP32) (Vibrio splendidus (strain Mel32)).